A 242-amino-acid chain; its full sequence is RNA polymerase sigma factor for flagellar operon (242 aa).

A Polymerase core binding motif is present at residues 55–68; it reads DMQQIGLIALVEAG. The H-T-H motif DNA-binding region spans 211-230; sequence LHEIALVLDLTPPRICQLHK.

The protein belongs to the sigma-70 factor family.

Its function is as follows. Sigma factors are initiation factors that promote the attachment of RNA polymerase to specific initiation sites and are then released. This alternative sigma factor is specific for the flagellin gene (fliC) expression. The polypeptide is RNA polymerase sigma factor for flagellar operon (lafS) (Vibrio parahaemolyticus serotype O3:K6 (strain RIMD 2210633)).